The chain runs to 157 residues: NADPH-dependent 7-cyano-7-deazaguanine reductase (157 aa).

C55 functions as the Thioimide intermediate in the catalytic mechanism. The active-site Proton donor is D62. Residues 77 to 79 (VES) and 96 to 97 (HE) each bind substrate.

It belongs to the GTP cyclohydrolase I family. QueF type 1 subfamily.

It is found in the cytoplasm. The enzyme catalyses 7-aminomethyl-7-carbaguanine + 2 NADP(+) = 7-cyano-7-deazaguanine + 2 NADPH + 3 H(+). It participates in tRNA modification; tRNA-queuosine biosynthesis. In terms of biological role, catalyzes the NADPH-dependent reduction of 7-cyano-7-deazaguanine (preQ0) to 7-aminomethyl-7-deazaguanine (preQ1). In Neisseria meningitidis serogroup A / serotype 4A (strain DSM 15465 / Z2491), this protein is NADPH-dependent 7-cyano-7-deazaguanine reductase.